The sequence spans 136 residues: WADLNTNNLDDPGAFYGVTSVYESNENMTITCSTKVCSFGKQVVEKVETEYARNEGGRFVYRIQRSPMCEYMVNFIHKLKHLPEKYMMNSVLENFTILQVVSNRDTQETLLCAAFVFEVSNSEHGAQHHIYRLVKT.

The protein resides in the nucleus. In terms of biological role, probable transcription factor that function in the regulation of cell-specific gene expression during drosophila development, particularly in the differentiation of the nervous system. The sequence is that of Protein scalloped (SD) from Junonia coenia (Peacock butterfly).